The following is a 349-amino-acid chain: E3 ubiquitin-protein ligase rnf146 (349 aa).

The segment at 1–21 (MASCGEVDHSVSSLPSSKKGS) is disordered. Over residues 10-21 (SVSSLPSSKKGS) the composition is skewed to low complexity. The RING-type zinc-finger motif lies at 41–79 (CAICLQSCVHPVQLPCRHVFCFLCVKGASWQSKRCALCR). Residues 97–173 (ELKTGGRGAT…EHGRRRKIKR (77 aa)) enclose the WWE domain. 7 residues coordinate a glycoprotein: Tyr113, Arg116, Trp120, Tyr150, Gln159, Arg169, and Lys181. 2 disordered regions span residues 226-251 (TTVL…SPSL) and 264-349 (DAPE…CTEV). Positions 283–292 (SMSSSPNTYA) are enriched in polar residues. Positions 298–307 (WSDDEGDGEA) are enriched in acidic residues. Residues 308–317 (VEPREQRLRL) are compositionally biased toward basic and acidic residues.

The protein localises to the cytoplasm. It localises to the cytosol. Its subcellular location is the nucleus. It catalyses the reaction S-ubiquitinyl-[E2 ubiquitin-conjugating enzyme]-L-cysteine + [acceptor protein]-L-lysine = [E2 ubiquitin-conjugating enzyme]-L-cysteine + N(6)-ubiquitinyl-[acceptor protein]-L-lysine.. It participates in protein modification; protein ubiquitination. In terms of biological role, E3 ubiquitin-protein ligase that specifically binds poly-ADP-ribosylated proteins and mediates their ubiquitination and subsequent degradation. May regulate many important biological processes, such as cell survival and DNA damage response. Acts as an activator of the Wnt signaling pathway by mediating the ubiquitination of poly-ADP-ribosylated proteins. Neuroprotective protein. Protects against cell death induced by DNA damaging agents and rescues cells from G1 arrest. Promotes cell survival after gamma-irradiation. Facilitates DNA repair. The chain is E3 ubiquitin-protein ligase rnf146 (rnf146) from Salmo salar (Atlantic salmon).